A 508-amino-acid polypeptide reads, in one-letter code: Photosystem II CP47 reaction center protein (508 aa).

Transmembrane regions (helical) follow at residues 21-36, 101-115, 140-156, 203-218, 237-252, and 457-472; these read AVHL…WAGS, ITLS…IWHW, GIHL…FGAF, IAAG…FHLS, VLSS…AFVV, and TFAL…HGAR.

It belongs to the PsbB/PsbC family. PsbB subfamily. PSII is composed of 1 copy each of membrane proteins PsbA, PsbB, PsbC, PsbD, PsbE, PsbF, PsbH, PsbI, PsbJ, PsbK, PsbL, PsbM, PsbT, PsbX, PsbY, PsbZ, Psb30/Ycf12, at least 3 peripheral proteins of the oxygen-evolving complex and a large number of cofactors. It forms dimeric complexes. The cofactor is Binds multiple chlorophylls. PSII binds additional chlorophylls, carotenoids and specific lipids..

The protein localises to the plastid. It localises to the chloroplast thylakoid membrane. In terms of biological role, one of the components of the core complex of photosystem II (PSII). It binds chlorophyll and helps catalyze the primary light-induced photochemical processes of PSII. PSII is a light-driven water:plastoquinone oxidoreductase, using light energy to abstract electrons from H(2)O, generating O(2) and a proton gradient subsequently used for ATP formation. In Psilotum nudum (Whisk fern), this protein is Photosystem II CP47 reaction center protein.